Reading from the N-terminus, the 355-residue chain is Histidinol-phosphate aminotransferase 2 (355 aa).

Lysine 213 is subject to N6-(pyridoxal phosphate)lysine.

It belongs to the class-II pyridoxal-phosphate-dependent aminotransferase family. Histidinol-phosphate aminotransferase subfamily. As to quaternary structure, homodimer. Pyridoxal 5'-phosphate serves as cofactor.

The catalysed reaction is L-histidinol phosphate + 2-oxoglutarate = 3-(imidazol-4-yl)-2-oxopropyl phosphate + L-glutamate. The protein operates within amino-acid biosynthesis; L-histidine biosynthesis; L-histidine from 5-phospho-alpha-D-ribose 1-diphosphate: step 7/9. This chain is Histidinol-phosphate aminotransferase 2, found in Burkholderia lata (strain ATCC 17760 / DSM 23089 / LMG 22485 / NCIMB 9086 / R18194 / 383).